Reading from the N-terminus, the 144-residue chain is MESPLGSDLARLVRIWRALIDHRLKPLKLTQTHWITLHNICQLPPEQSQIQLAKAIGIEQPSLVRTLDQLEEKSLIIRHTCLNDRRAKRIKLTDNARPVINEVNRVISITRNEIFNGISNEETIFLNKIISKLEKNIINLHNKN.

Positions 2–135 constitute an HTH marR-type domain; the sequence is ESPLGSDLAR…LNKIISKLEK (134 aa). Positions 49–72 form a DNA-binding region, H-T-H motif; sequence QIQLAKAIGIEQPSLVRTLDQLEE.

The protein belongs to the SlyA family. In terms of assembly, homodimer.

Transcription regulator that can specifically activate or repress expression of target genes. The polypeptide is Transcriptional regulator SlyA (Blochmanniella pennsylvanica (strain BPEN)).